A 337-amino-acid polypeptide reads, in one-letter code: tRNA N6-adenosine threonylcarbamoyltransferase (337 aa).

Fe cation-binding residues include H110 and H114. Substrate-binding positions include 133–137, D166, G179, and N271; that span reads LVSGK. D300 contributes to the Fe cation binding site.

The protein belongs to the KAE1 / TsaD family. The cofactor is Fe(2+).

It localises to the cytoplasm. It catalyses the reaction L-threonylcarbamoyladenylate + adenosine(37) in tRNA = N(6)-L-threonylcarbamoyladenosine(37) in tRNA + AMP + H(+). Required for the formation of a threonylcarbamoyl group on adenosine at position 37 (t(6)A37) in tRNAs that read codons beginning with adenine. Is involved in the transfer of the threonylcarbamoyl moiety of threonylcarbamoyl-AMP (TC-AMP) to the N6 group of A37, together with TsaE and TsaB. TsaD likely plays a direct catalytic role in this reaction. The protein is tRNA N6-adenosine threonylcarbamoyltransferase of Buchnera aphidicola subsp. Schizaphis graminum (strain Sg).